Reading from the N-terminus, the 305-residue chain is Virulence plasmid integrase pGP7-D (305 aa).

In terms of domain architecture, Core-binding (CB) spans 13-99 (LTFGEASEIW…CYISFTKFLY (87 aa)). A Tyr recombinase domain is found at 127-303 (VKTVSISKKE…GNSSVANIPT (177 aa)). Residues lysine 188 and arginine 257 contribute to the active site. Tyrosine 289 functions as the O-(3'-phospho-DNA)-tyrosine intermediate in the catalytic mechanism.

It belongs to the 'phage' integrase family.

The chain is Virulence plasmid integrase pGP7-D from Chlamydia muridarum (strain MoPn / Nigg).